We begin with the raw amino-acid sequence, 252 residues long: Putative peptide zinc metalloprotease protein YydH (252 aa).

Transmembrane regions (helical) follow at residues 56-76 (FFYL…IHLI) and 85-105 (VFYG…NIVL). Histidine 106 provides a ligand contact to Zn(2+). Glutamate 107 is an active-site residue. Histidine 110 contributes to the Zn(2+) binding site. 3 helical membrane-spanning segments follow: residues 152 to 172 (IIVH…LELI), 181 to 201 (ALTM…IPIL), and 231 to 251 (IQII…LYIV).

It belongs to the peptidase M50B family. Zn(2+) is required as a cofactor.

Its subcellular location is the cell membrane. Its function is as follows. Required for production of the modified peptide YydF. May process the precursor form of YydF to release the active peptide (Potential). The sequence is that of Putative peptide zinc metalloprotease protein YydH (yydH) from Bacillus subtilis (strain 168).